The chain runs to 247 residues: Uridylate kinase (247 aa).

15-18 (KLSG) serves as a coordination point for ATP. An involved in allosteric activation by GTP region spans residues 23-28 (GDEGFG). G57 is a UMP binding site. ATP-binding residues include G58 and R62. UMP-binding positions include D77 and 138–145 (TGNPFFTT). The ATP site is built by T165, Y171, and D174.

The protein belongs to the UMP kinase family. Homohexamer.

The protein localises to the cytoplasm. It catalyses the reaction UMP + ATP = UDP + ADP. Its pathway is pyrimidine metabolism; CTP biosynthesis via de novo pathway; UDP from UMP (UMPK route): step 1/1. With respect to regulation, allosterically activated by GTP. Inhibited by UTP. Functionally, catalyzes the reversible phosphorylation of UMP to UDP. This Saccharophagus degradans (strain 2-40 / ATCC 43961 / DSM 17024) protein is Uridylate kinase.